A 355-amino-acid polypeptide reads, in one-letter code: Tetraacyldisaccharide 4'-kinase (355 aa).

Residue 49–56 (SAGGTGKT) coordinates ATP.

It belongs to the LpxK family.

It catalyses the reaction a lipid A disaccharide + ATP = a lipid IVA + ADP + H(+). It functions in the pathway glycolipid biosynthesis; lipid IV(A) biosynthesis; lipid IV(A) from (3R)-3-hydroxytetradecanoyl-[acyl-carrier-protein] and UDP-N-acetyl-alpha-D-glucosamine: step 6/6. Transfers the gamma-phosphate of ATP to the 4'-position of a tetraacyldisaccharide 1-phosphate intermediate (termed DS-1-P) to form tetraacyldisaccharide 1,4'-bis-phosphate (lipid IVA). The sequence is that of Tetraacyldisaccharide 4'-kinase from Chlorobium phaeobacteroides (strain DSM 266 / SMG 266 / 2430).